The sequence spans 321 residues: Glutamyl-Q tRNA(Asp) synthetase (321 aa).

L-glutamate is bound by residues 25–29 and Glu61; that span reads RFAPS. Residues 28-38 carry the 'HIGH' region motif; sequence PSPSGDLHFGS. Zn(2+)-binding residues include Cys117, Cys119, Tyr131, and Cys135. 2 residues coordinate L-glutamate: Tyr188 and Arg206. The 'KMSKS' region signature appears at 244-248; that stretch reads KLSKQ. Residue Lys247 participates in ATP binding.

This sequence belongs to the class-I aminoacyl-tRNA synthetase family. GluQ subfamily. The cofactor is Zn(2+).

Catalyzes the tRNA-independent activation of glutamate in presence of ATP and the subsequent transfer of glutamate onto a tRNA(Asp). Glutamate is transferred on the 2-amino-5-(4,5-dihydroxy-2-cyclopenten-1-yl) moiety of the queuosine in the wobble position of the QUC anticodon. This Yersinia pestis protein is Glutamyl-Q tRNA(Asp) synthetase.